Consider the following 273-residue polypeptide: Putative pyruvate, phosphate dikinase regulatory protein (273 aa).

149-156 provides a ligand contact to ADP; the sequence is GPSRTSKT.

This sequence belongs to the pyruvate, phosphate/water dikinase regulatory protein family. PDRP subfamily.

The catalysed reaction is N(tele)-phospho-L-histidyl/L-threonyl-[pyruvate, phosphate dikinase] + ADP = N(tele)-phospho-L-histidyl/O-phospho-L-threonyl-[pyruvate, phosphate dikinase] + AMP + H(+). It catalyses the reaction N(tele)-phospho-L-histidyl/O-phospho-L-threonyl-[pyruvate, phosphate dikinase] + phosphate + H(+) = N(tele)-phospho-L-histidyl/L-threonyl-[pyruvate, phosphate dikinase] + diphosphate. Its function is as follows. Bifunctional serine/threonine kinase and phosphorylase involved in the regulation of the pyruvate, phosphate dikinase (PPDK) by catalyzing its phosphorylation/dephosphorylation. The polypeptide is Putative pyruvate, phosphate dikinase regulatory protein (Rickettsia rickettsii (strain Iowa)).